The sequence spans 102 residues: Small ribosomal subunit protein uS10 (102 aa).

Belongs to the universal ribosomal protein uS10 family. In terms of assembly, part of the 30S ribosomal subunit.

In terms of biological role, involved in the binding of tRNA to the ribosomes. This is Small ribosomal subunit protein uS10 from Fervidobacterium nodosum (strain ATCC 35602 / DSM 5306 / Rt17-B1).